An 86-amino-acid polypeptide reads, in one-letter code: Anti-adapter protein IraP (86 aa).

Residues 1–36 (MKNLIAELLLKLAQKEEESKELCAQVEALEIIVTAM) adopt a coiled-coil conformation.

This sequence belongs to the IraP family. In terms of assembly, interacts with RssB.

The protein localises to the cytoplasm. Its function is as follows. Inhibits RpoS proteolysis by regulating RssB activity, thereby increasing the stability of the sigma stress factor RpoS especially during phosphate starvation, but also in stationary phase and during nitrogen starvation. Its effect on RpoS stability is due to its interaction with RssB, which probably blocks the interaction of RssB with RpoS, and the consequent delivery of the RssB-RpoS complex to the ClpXP protein degradation pathway. The polypeptide is Anti-adapter protein IraP (Shigella boydii serotype 18 (strain CDC 3083-94 / BS512)).